Reading from the N-terminus, the 280-residue chain is F420-dependent methylenetetrahydromethanopterin dehydrogenase (280 aa).

The protein belongs to the MTD family.

The catalysed reaction is 5,10-methylenetetrahydromethanopterin + oxidized coenzyme F420-(gamma-L-Glu)(n) + 2 H(+) = 5,10-methenyl-5,6,7,8-tetrahydromethanopterin + reduced coenzyme F420-(gamma-L-Glu)(n). It participates in one-carbon metabolism; methanogenesis from CO(2); 5,10-methylene-5,6,7,8-tetrahydromethanopterin from 5,10-methenyl-5,6,7,8-tetrahydromethanopterin (coenzyme F420 route): step 1/1. Functionally, catalyzes the reversible reduction of methenyl-H(4)MPT(+) to methylene-H(4)MPT. This Methanocorpusculum labreanum (strain ATCC 43576 / DSM 4855 / Z) protein is F420-dependent methylenetetrahydromethanopterin dehydrogenase.